Consider the following 75-residue polypeptide: Exodeoxyribonuclease 7 small subunit (75 aa).

This sequence belongs to the XseB family. Heterooligomer composed of large and small subunits.

The protein localises to the cytoplasm. The catalysed reaction is Exonucleolytic cleavage in either 5'- to 3'- or 3'- to 5'-direction to yield nucleoside 5'-phosphates.. Functionally, bidirectionally degrades single-stranded DNA into large acid-insoluble oligonucleotides, which are then degraded further into small acid-soluble oligonucleotides. This chain is Exodeoxyribonuclease 7 small subunit, found in Anaplasma phagocytophilum (strain HZ).